Here is a 287-residue protein sequence, read N- to C-terminus: ATP synthase gamma chain (287 aa).

This sequence belongs to the ATPase gamma chain family. As to quaternary structure, F-type ATPases have 2 components, CF(1) - the catalytic core - and CF(0) - the membrane proton channel. CF(1) has five subunits: alpha(3), beta(3), gamma(1), delta(1), epsilon(1). CF(0) has three main subunits: a, b and c.

It is found in the cell inner membrane. Functionally, produces ATP from ADP in the presence of a proton gradient across the membrane. The gamma chain is believed to be important in regulating ATPase activity and the flow of protons through the CF(0) complex. This Marinobacter nauticus (strain ATCC 700491 / DSM 11845 / VT8) (Marinobacter aquaeolei) protein is ATP synthase gamma chain.